The chain runs to 144 residues: MELNNLKPAEGAKHAKRRVGRGIGSGLGKTAGRGHKGQKSRSGGFHKVGFEGGQMPLQRRLPKRGFTSLTKEFVGEVRLGDLEKLPVDDIDLLALKQAGLIGEMMTSAKIIATGELKRKIVVKGLSATKGARAAIEAAGGSFAE.

Residues Met1 to Pro62 form a disordered region. Residues Arg21–Ala31 show a composition bias toward gly residues.

It belongs to the universal ribosomal protein uL15 family. Part of the 50S ribosomal subunit.

In terms of biological role, binds to the 23S rRNA. The sequence is that of Large ribosomal subunit protein uL15 from Paraburkholderia phymatum (strain DSM 17167 / CIP 108236 / LMG 21445 / STM815) (Burkholderia phymatum).